The chain runs to 494 residues: tRNA-2-methylthio-N(6)-dimethylallyladenosine synthase (494 aa).

Positions 12–131 (PTYRVVTYGC…LPVLLKRARH (120 aa)) constitute an MTTase N-terminal domain. [4Fe-4S] cluster-binding residues include C21, C60, C94, C168, C172, and C175. The Radical SAM core domain maps to 154–385 (RDSAYSAWVS…ELVDDIAWQE (232 aa)). One can recognise a TRAM domain in the interval 387-457 (KAQVGRAVEV…PHHLVADGGL (71 aa)).

It belongs to the methylthiotransferase family. MiaB subfamily. Monomer. [4Fe-4S] cluster serves as cofactor.

The protein resides in the cytoplasm. The enzyme catalyses N(6)-dimethylallyladenosine(37) in tRNA + (sulfur carrier)-SH + AH2 + 2 S-adenosyl-L-methionine = 2-methylsulfanyl-N(6)-dimethylallyladenosine(37) in tRNA + (sulfur carrier)-H + 5'-deoxyadenosine + L-methionine + A + S-adenosyl-L-homocysteine + 2 H(+). Catalyzes the methylthiolation of N6-(dimethylallyl)adenosine (i(6)A), leading to the formation of 2-methylthio-N6-(dimethylallyl)adenosine (ms(2)i(6)A) at position 37 in tRNAs that read codons beginning with uridine. The polypeptide is tRNA-2-methylthio-N(6)-dimethylallyladenosine synthase (Cutibacterium acnes (strain DSM 16379 / KPA171202) (Propionibacterium acnes)).